A 694-amino-acid polypeptide reads, in one-letter code: Elongation factor G (694 aa).

Residues 6–288 (KLYRNIGIAA…GVIEYLPSPT (283 aa)) enclose the tr-type G domain. Residues 15 to 22 (AHVDAGKT), 86 to 90 (DTPGH), and 140 to 143 (NKMD) contribute to the GTP site.

This sequence belongs to the TRAFAC class translation factor GTPase superfamily. Classic translation factor GTPase family. EF-G/EF-2 subfamily.

Its subcellular location is the cytoplasm. Its function is as follows. Catalyzes the GTP-dependent ribosomal translocation step during translation elongation. During this step, the ribosome changes from the pre-translocational (PRE) to the post-translocational (POST) state as the newly formed A-site-bound peptidyl-tRNA and P-site-bound deacylated tRNA move to the P and E sites, respectively. Catalyzes the coordinated movement of the two tRNA molecules, the mRNA and conformational changes in the ribosome. This Legionella pneumophila (strain Lens) protein is Elongation factor G.